The following is a 398-amino-acid chain: Phosphoglycerate kinase (398 aa).

Residues 21 to 23, arginine 36, 59 to 62, arginine 119, and arginine 157 contribute to the substrate site; these read DFN and HLGR. Residues lysine 208, glycine 296, glutamate 327, and 354-357 contribute to the ATP site; that span reads GGDS.

The protein belongs to the phosphoglycerate kinase family. In terms of assembly, monomer.

Its subcellular location is the cytoplasm. The enzyme catalyses (2R)-3-phosphoglycerate + ATP = (2R)-3-phospho-glyceroyl phosphate + ADP. It functions in the pathway carbohydrate degradation; glycolysis; pyruvate from D-glyceraldehyde 3-phosphate: step 2/5. The protein is Phosphoglycerate kinase of Streptococcus equi subsp. zooepidemicus (strain MGCS10565).